The chain runs to 531 residues: Coiled-coil domain-containing protein 9 (531 aa).

Residues 40–531 (EDRKKAELEG…PGEAWPFESV (492 aa)) form a disordered region. Basic and acidic residues predominate over residues 59 to 72 (RSVEKENVAVESEK). Ser80 is modified (phosphoserine). Thr95 bears the Phosphothreonine mark. Omega-N-methylarginine is present on Arg107. Ser111 carries the post-translational modification Phosphoserine. An omega-N-methylarginine mark is found at Arg121, Arg128, and Arg130. An asymmetric dimethylarginine mark is found at Arg131, Arg133, and Arg135. Residue Ser137 is modified to Phosphoserine. Basic and acidic residues-rich tracts occupy residues 148–185 (ISDRKSKEWEERRRQNIEKMNEEMEKIAEYERNQREGV), 194–217 (FLDDPRRRSGPLEESERDRREESR), and 227–241 (DFERVRCGLEHERQG). A coiled-coil region spans residues 149 to 185 (SDRKSKEWEERRRQNIEKMNEEMEKIAEYERNQREGV). The residue at position 202 (Ser202) is a Phosphoserine. 2 positions are modified to phosphoserine: Ser248 and Ser255. 4 stretches are compositionally biased toward basic and acidic residues: residues 258 to 279 (GRERSEYLRWKQEREKIDQERL), 289 to 302 (WRREWDAEKTDGMF), 311 to 320 (EPSHRYDDQA), and 361 to 372 (YSDHDDRWETKE). Phosphoserine occurs at positions 376, 386, and 390. The span at 386–395 (SPETSPKETP) shows a compositional bias: low complexity. The span at 396–406 (MQPPEIPAPAH) shows a compositional bias: pro residues. The segment covering 411-446 (DEGEENEGEEDEEWEDISEDEEEEEIEVEEGDEEEP) has biased composition (acidic residues). Position 521 is a phosphoserine (Ser521).

Probable component of the exon junction complex (EJC); the association is RNA-dependent.

Probable component of the exon junction complex (EJC), a multiprotein complex that associates immediately upstream of the exon-exon junction on mRNAs and serves as a positional landmark for the intron exon structure of genes and directs post-transcriptional processes in the cytoplasm such as mRNA export, nonsense-mediated mRNA decay (NMD) or translation. This chain is Coiled-coil domain-containing protein 9, found in Homo sapiens (Human).